The sequence spans 1431 residues: DNA polymerase II large subunit (1431 aa).

Positions L1388–K1431 are disordered. A compositionally biased stretch (basic and acidic residues) spans G1399–K1415.

It belongs to the archaeal DNA polymerase II family. As to quaternary structure, heterodimer of a large subunit and a small subunit. Post-translationally, this protein undergoes a protein self splicing that involves a post-translational excision of the intervening region (intein) followed by peptide ligation.

The enzyme catalyses DNA(n) + a 2'-deoxyribonucleoside 5'-triphosphate = DNA(n+1) + diphosphate. The catalysed reaction is Exonucleolytic cleavage in the 3'- to 5'-direction to yield nucleoside 5'-phosphates.. Possesses two activities: a DNA synthesis (polymerase) and an exonucleolytic activity that degrades single-stranded DNA in the 3'- to 5'-direction. Has a template-primer preference which is characteristic of a replicative DNA polymerase. The sequence is that of DNA polymerase II large subunit (polC) from Pyrococcus horikoshii (strain ATCC 700860 / DSM 12428 / JCM 9974 / NBRC 100139 / OT-3).